Reading from the N-terminus, the 204-residue chain is Abscisic acid receptor PYL3 (204 aa).

Residues 40–191 (HEPRDHQCSS…NLKSLAEVSE (152 aa)) are START-like. Cysteines 47 and 172 form a disulfide. Abscisate is bound by residues Lys76, 104-109 (ATRSTE), 131-137 (RLKNYSS), and Glu156. A Gate loop motif is present at residues 100-104 (SGLPA). A Latch loop motif is present at residues 130 to 132 (HRL).

This sequence belongs to the PYR/PYL/RCAR abscisic acid intracellular receptor family. Monomer. Interacts with PP2C50. Binding to PP2C50 is dependent on the presence of abscisic acid (ABA). Interacts with PP2C30 and PP2C53.

The protein resides in the cytoplasm. It is found in the cytosol. The protein localises to the nucleus. Functionally, involved in abscisic acid (ABA) signaling during seed germination and abiotic stress response. Acts as a positive regulator of ABA-mediated inhibition of seed germination, and tolerance to drought and cold stresses. Together with PP2C50 and SAPK10, may form an ABA signaling module involved in stress response. Inhibits the protein phosphatases PP2C06 and PP2C09 when activated by abscisic acid (ABA). The chain is Abscisic acid receptor PYL3 from Oryza sativa subsp. japonica (Rice).